Reading from the N-terminus, the 208-residue chain is MSTPHWFDQGSLVLASNNKGKVAEFEKLFEQLKLPVEIIPQGHLNIPDAIEDGLSFIENAIIKARHASKISGKPAMADDSGICVPVLGGAPGIYSARYAGEHGDDAANNAKLLNDLLPFRKNGEAIEGMFVCVLALVTHAEDPLPQIFQGIWHGEILEAPRGENGFGYDPLFWLPELQVSSAELSKEEKNKISHRGQAMQLFRESLQK.

16–21 (SNNKGK) lines the substrate pocket. Asp79 serves as the catalytic Proton acceptor. Residue Asp79 participates in Mg(2+) binding. Substrate-binding positions include Ser80, 166-169 (FGYD), Lys189, and 194-195 (HR).

This sequence belongs to the HAM1 NTPase family. In terms of assembly, homodimer. It depends on Mg(2+) as a cofactor.

The enzyme catalyses XTP + H2O = XMP + diphosphate + H(+). The catalysed reaction is dITP + H2O = dIMP + diphosphate + H(+). It carries out the reaction ITP + H2O = IMP + diphosphate + H(+). Its function is as follows. Pyrophosphatase that catalyzes the hydrolysis of nucleoside triphosphates to their monophosphate derivatives, with a high preference for the non-canonical purine nucleotides XTP (xanthosine triphosphate), dITP (deoxyinosine triphosphate) and ITP. Seems to function as a house-cleaning enzyme that removes non-canonical purine nucleotides from the nucleotide pool, thus preventing their incorporation into DNA/RNA and avoiding chromosomal lesions. The polypeptide is dITP/XTP pyrophosphatase (Acinetobacter baumannii (strain ACICU)).